The chain runs to 605 residues: E3 ubiquitin-protein ligase synoviolin A (605 aa).

The chain crosses the membrane as a helical span at residues 1–19; it reads MTGASLALTAAVVAHAYYL. The Lumenal segment spans residues 20-35; that stretch reads KNQFYPTVVYLTKSSP. A helical membrane pass occupies residues 36–56; that stretch reads SMAVLYIQAFVLVFLLGKFMG. Residues 57-92 are Cytoplasmic-facing; the sequence is KVFFGQLRAAEMEHLLERSWYAVTETCLAFTVFRDD. A helical transmembrane segment spans residues 93-113; that stretch reads FSPRFVALFTLLLFLKCFHWL. Topologically, residues 114–129 are lumenal; the sequence is AEDRVDFMERSPNISW. Residues 130–150 traverse the membrane as a helical segment; it reads LFHFRILALMLLLGVLDAFFV. The Cytoplasmic segment spans residues 151-163; that stretch reads SHAYHSLVIRGAS. Residues 164-184 form a helical membrane-spanning segment; it reads VQLVFGFEYAILMTVILTVFI. Residues 185–218 are Lumenal-facing; it reads KYILHSVDLQSENPWDNKAVYMLYTELFTGFIKV. A helical membrane pass occupies residues 219–239; it reads LLYVAFMTIMVKVHTFPLFAI. Residues 230–264 are interaction with p53/TP53; sequence KVHTFPLFAIRPMYLAMRQFKKAVTDAIMSRRAIR. Residues 240 to 605 are Cytoplasmic-facing; sequence RPMYLAMRQF…KLETGTTDSQ (366 aa). Zn(2+) is bound by residues C285, C288, C301, H303, H306, C309, C320, and C323. The RING-type; atypical zinc-finger motif lies at 285–324; the sequence is CIICREEMVTGAKRLPCNHIFHTSCLRSWFQRQQTCPTCR. Positions 334–355 are enriched in low complexity; that stretch reads TQPQTPTEQQNQHQNQAQQQPT. The tract at residues 334–433 is disordered; the sequence is TQPQTPTEQQ…QPGAALPGFP (100 aa). Residues 356–391 are compositionally biased toward pro residues; sequence PVIPPQPNFPPGILPPFPPGMFPLWPPMGPFPPVPG. The segment covering 403-414 has biased composition (low complexity); it reads PGSSSGSSPRPG. Over residues 415 to 424 the composition is skewed to polar residues; the sequence is ETSNVGSESQ. Residues 465–496 are a coiled coil; that stretch reads EELRAMEGHERQNLEARLQCLQNIHTLLDAAM. Residues 513 to 605 are disordered; it reads QPPISSTSTS…KLETGTTDSQ (93 aa). Residues 516 to 539 show a composition bias toward low complexity; it reads ISSTSTSTSSAASASTAPTTSNIS. The segment covering 546 to 555 has biased composition (polar residues); that stretch reads DTTSTVTNTE. A compositionally biased stretch (low complexity) spans 556 to 579; that stretch reads SSQQSAPPAPVSVETLSGAEGGET.

It belongs to the HRD1 family. In terms of assembly, homodimer.

Its subcellular location is the endoplasmic reticulum membrane. The catalysed reaction is S-ubiquitinyl-[E2 ubiquitin-conjugating enzyme]-L-cysteine + [acceptor protein]-L-lysine = [E2 ubiquitin-conjugating enzyme]-L-cysteine + N(6)-ubiquitinyl-[acceptor protein]-L-lysine.. Its pathway is protein modification; protein ubiquitination. Its function is as follows. E3 ubiquitin-protein ligase which accepts ubiquitin specifically from endoplasmic reticulum-associated UBC7 E2 ligase and transfers it to substrates, promoting their degradation. Component of the endoplasmic reticulum quality control (ERQC) system also called ER-associated degradation (ERAD) involved in ubiquitin-dependent degradation of misfolded endoplasmic reticulum proteins. Also promotes the degradation of normal but naturally short-lived proteins. Protects cells from ER stress-induced apoptosis. Sequesters p53 in the cytoplasm and promotes its degradation, thereby negatively regulating its biological function in transcription, cell cycle regulation and apoptosis. In Xenopus laevis (African clawed frog), this protein is E3 ubiquitin-protein ligase synoviolin A (syvn1-a).